A 692-amino-acid polypeptide reads, in one-letter code: Elongation factor G (692 aa).

The tr-type G domain maps to 8 to 282 (AKTRNIGIMA…AVIAYLPSPL (275 aa)). GTP-binding positions include 17–24 (AHVDAGKT), 81–85 (DTPGH), and 135–138 (NKMD).

Belongs to the TRAFAC class translation factor GTPase superfamily. Classic translation factor GTPase family. EF-G/EF-2 subfamily.

Its subcellular location is the cytoplasm. Catalyzes the GTP-dependent ribosomal translocation step during translation elongation. During this step, the ribosome changes from the pre-translocational (PRE) to the post-translocational (POST) state as the newly formed A-site-bound peptidyl-tRNA and P-site-bound deacylated tRNA move to the P and E sites, respectively. Catalyzes the coordinated movement of the two tRNA molecules, the mRNA and conformational changes in the ribosome. The protein is Elongation factor G (fus) of Streptococcus pyogenes serotype M1.